The following is a 677-amino-acid chain: DNA ligase (677 aa).

NAD(+) is bound by residues 36 to 40 (DAEYD), 85 to 86 (SI), and glutamate 122. Lysine 124 (N6-AMP-lysine intermediate) is an active-site residue. NAD(+) is bound by residues arginine 145, glutamate 181, lysine 298, and lysine 322. The Zn(2+) site is built by cysteine 416, cysteine 419, cysteine 434, and cysteine 440. Residues 600–677 (LTPRPLAGKT…DEAALRALLD (78 aa)) form the BRCT domain.

This sequence belongs to the NAD-dependent DNA ligase family. LigA subfamily. Mg(2+) is required as a cofactor. Mn(2+) serves as cofactor.

It carries out the reaction NAD(+) + (deoxyribonucleotide)n-3'-hydroxyl + 5'-phospho-(deoxyribonucleotide)m = (deoxyribonucleotide)n+m + AMP + beta-nicotinamide D-nucleotide.. DNA ligase that catalyzes the formation of phosphodiester linkages between 5'-phosphoryl and 3'-hydroxyl groups in double-stranded DNA using NAD as a coenzyme and as the energy source for the reaction. It is essential for DNA replication and repair of damaged DNA. The polypeptide is DNA ligase (Methylibium petroleiphilum (strain ATCC BAA-1232 / LMG 22953 / PM1)).